The chain runs to 208 residues: uncharacterized protein (208 aa).

This is an uncharacterized protein from Caenorhabditis elegans.